A 147-amino-acid polypeptide reads, in one-letter code: 3-hydroxyacyl-[acyl-carrier-protein] dehydratase FabZ (147 aa).

The active site involves His-50.

This sequence belongs to the thioester dehydratase family. FabZ subfamily.

Its subcellular location is the cytoplasm. It carries out the reaction a (3R)-hydroxyacyl-[ACP] = a (2E)-enoyl-[ACP] + H2O. Functionally, involved in unsaturated fatty acids biosynthesis. Catalyzes the dehydration of short chain beta-hydroxyacyl-ACPs and long chain saturated and unsaturated beta-hydroxyacyl-ACPs. The protein is 3-hydroxyacyl-[acyl-carrier-protein] dehydratase FabZ of Lactiplantibacillus plantarum (strain ATCC BAA-793 / NCIMB 8826 / WCFS1) (Lactobacillus plantarum).